A 189-amino-acid polypeptide reads, in one-letter code: dCTP deaminase (189 aa).

Residues 112–117 (KSTYAR), 136–138 (TLE), glutamine 157, tyrosine 171, and glutamine 181 each bind dCTP. Residue glutamate 138 is the Proton donor/acceptor of the active site.

This sequence belongs to the dCTP deaminase family. As to quaternary structure, homotrimer.

The enzyme catalyses dCTP + H2O + H(+) = dUTP + NH4(+). Its pathway is pyrimidine metabolism; dUMP biosynthesis; dUMP from dCTP (dUTP route): step 1/2. In terms of biological role, catalyzes the deamination of dCTP to dUTP. This is dCTP deaminase from Teredinibacter turnerae (strain ATCC 39867 / T7901).